Reading from the N-terminus, the 526-residue chain is Opine oxidase subunit A (526 aa).

The [2Fe-2S] cluster site is built by C396, C398, C431, and C436.

To T-protein and to dimethylglycine dehydrogenase. Heterodimer of a subunit A and a subunit B. It depends on [2Fe-2S] cluster as a cofactor.

The protein operates within opine metabolism; octopine degradation. Oxidative cleavage of octopine into L-arginine and pyruvate. In Rhizobium meliloti (Ensifer meliloti), this protein is Opine oxidase subunit A (ooxA).